Consider the following 479-residue polypeptide: Flavonol 3-O-glucosyltransferase UGT71C4 (479 aa).

The active-site Proton acceptor is the histidine 17. Position 17 (histidine 17) interacts with an anthocyanidin. The active-site Charge relay is aspartate 127. UDP-alpha-D-glucose contacts are provided by threonine 150, alanine 350, glutamine 352, histidine 367, tryptophan 370, asparagine 371, serine 372, and glutamate 375. Alanine 390 is an an anthocyanidin binding site. Residues glutamate 391 and glutamine 392 each contribute to the UDP-alpha-D-glucose site.

This sequence belongs to the UDP-glycosyltransferase family.

The enzyme catalyses a flavonol + UDP-alpha-D-glucose = a flavonol 3-O-beta-D-glucoside + UDP + H(+). The catalysed reaction is a 7-O-hydroxy-flavonol + UDP-alpha-D-glucose = a flavonol 7-O-beta-D-glucoside + UDP + H(+). Its function is as follows. Possesses quercetin 3-O-glucosyltransferase and 7-O-glucosyltransferase activities in vitro. Also active in vitro on benzoates and benzoate derivatives. This is Flavonol 3-O-glucosyltransferase UGT71C4 from Arabidopsis thaliana (Mouse-ear cress).